A 224-amino-acid chain; its full sequence is 2-C-methyl-D-erythritol 4-phosphate cytidylyltransferase (224 aa).

This sequence belongs to the IspD/TarI cytidylyltransferase family. IspD subfamily.

The enzyme catalyses 2-C-methyl-D-erythritol 4-phosphate + CTP + H(+) = 4-CDP-2-C-methyl-D-erythritol + diphosphate. It functions in the pathway isoprenoid biosynthesis; isopentenyl diphosphate biosynthesis via DXP pathway; isopentenyl diphosphate from 1-deoxy-D-xylulose 5-phosphate: step 2/6. In terms of biological role, catalyzes the formation of 4-diphosphocytidyl-2-C-methyl-D-erythritol from CTP and 2-C-methyl-D-erythritol 4-phosphate (MEP). The polypeptide is 2-C-methyl-D-erythritol 4-phosphate cytidylyltransferase (Saccharopolyspora erythraea (strain ATCC 11635 / DSM 40517 / JCM 4748 / NBRC 13426 / NCIMB 8594 / NRRL 2338)).